The primary structure comprises 462 residues: Ribosomal oxygenase 2 (462 aa).

Positions 1–24 (MPKKARPAGDGKEQGPAPKQVKVE) are disordered. The region spanning 139–271 (QPQRFKDELW…SSWGDFLLDT (133 aa)) is the JmjC domain. The Fe cation site is built by His179, Asp181, and His240. Phosphoserine is present on Ser308.

The protein belongs to the ROX family. MINA53 subfamily. It depends on Fe(2+) as a cofactor.

It localises to the nucleus. The protein resides in the nucleolus. It carries out the reaction L-histidyl-[ribosomal protein uL15] + 2-oxoglutarate + O2 = (3S)-3-hydroxy-L-histidyl-[ribosomal protein uL15] + succinate + CO2. It catalyses the reaction L-histidyl-[protein] + 2-oxoglutarate + O2 = (3S)-3-hydroxy-L-histidyl-[protein] + succinate + CO2. In terms of biological role, oxygenase that can act as both a histone lysine demethylase and a ribosomal histidine hydroxylase. Is involved in the demethylation of trimethylated 'Lys-9' on histone H3 (H3K9me3), leading to an increase in ribosomal RNA expression. Also catalyzes the hydroxylation of 60S ribosomal protein L27a on 'His-39'. May play an important role in cell growth and survival. May be involved in ribosome biogenesis, most likely during the assembly process of pre-ribosomal particles. The polypeptide is Ribosomal oxygenase 2 (RIOX2) (Bos taurus (Bovine)).